A 144-amino-acid chain; its full sequence is Cathelicidin-4 (144 aa).

An N-terminal signal peptide occupies residues 1 to 29; that stretch reads MQTQRASLSLGRWSLWLLLLGLVVPSASA. A propeptide spanning residues 30–130 is cleaved from the precursor; the sequence is QALSYREAVL…DLNCNELQSV (101 aa). Cystine bridges form between Cys-85/Cys-96 and Cys-107/Cys-124. Residue Arg-143 is modified to Arginine amide.

Belongs to the cathelicidin family. Elastase might be responsible for its maturation. Large granules of neutrophils.

Its subcellular location is the secreted. Its function is as follows. Potent microbicidal activity; active against S.aureus and E.coli. The sequence is that of Cathelicidin-4 (CATHL4) from Bos taurus (Bovine).